The following is a 568-amino-acid chain: Probable inactive poly [ADP-ribose] polymerase SRO1 (568 aa).

The span at 1–18 (MEAKIVKVSDSSYKDGLG) shows a compositional bias: basic and acidic residues. The interval 1–32 (MEAKIVKVSDSSYKDGLGKKRKHPGNYTPYDS) is disordered. Residues 77-152 (RYFSYYKKTG…ETGVKTQLAW (76 aa)) enclose the WWE domain. Disordered stretches follow at residues 220–241 (DFQAVQRSSNGPNDEASEDSCS) and 453–500 (ILPT…RRPR). A PARP catalytic domain is found at 245 to 463 (DDAVEKWDKT…LPTTQSRHES (219 aa)). Positions 497–568 (RRPRSPIMPF…TITGLQRSLG (72 aa)) constitute an RST domain.

Interacts with DREB2A, DREB2B, DREB2C and NAC082. In terms of tissue distribution, expressed in young developing tissues, such as young leaves and flowers and root tips. In mature plants, expressed in vasculature of leaves and roots.

The protein resides in the nucleus matrix. Its function is as follows. Probable inactive ADP-ribosyltransferase that functions with RCD1 to regulate oxidative stress, hormonal and developmental responses. May regulate some stress-responsive genes. Seems to play a smaller developmental role than R. This chain is Probable inactive poly [ADP-ribose] polymerase SRO1 (SRO1), found in Arabidopsis thaliana (Mouse-ear cress).